Here is an 86-residue protein sequence, read N- to C-terminus: Large ribosomal subunit protein eL20 (86 aa).

This sequence belongs to the eukaryotic ribosomal protein eL20 family. As to quaternary structure, part of the 50S ribosomal subunit. Binds 23S rRNA.

The protein is Large ribosomal subunit protein eL20 of Sulfolobus acidocaldarius (strain ATCC 33909 / DSM 639 / JCM 8929 / NBRC 15157 / NCIMB 11770).